A 108-amino-acid polypeptide reads, in one-letter code: UPF0060 membrane protein YnfA (108 aa).

At 1 to 5 (MIKTT) the chain is on the periplasmic side. The chain crosses the membrane as a helical span at residues 6 to 26 (LLFFATALCEIIGCFLPWLWL). Residues 27 to 30 (KRNA) lie on the Cytoplasmic side of the membrane. Residues 31 to 51 (SIWLLLPAGISLALFVWLLTL) traverse the membrane as a helical segment. At 52-60 (HPAASGRVY) the chain is on the periplasmic side. A helical membrane pass occupies residues 61-81 (AAYGGVYVCTALIWLRVVDGV). Topologically, residues 82–84 (KLS) are cytoplasmic. Residues 85-105 (LYDWTGALIALCGMLIIVAGW) traverse the membrane as a helical segment. The Periplasmic segment spans residues 106–108 (GRT).

The protein belongs to the UPF0060 family.

It is found in the cell inner membrane. The polypeptide is UPF0060 membrane protein YnfA (Escherichia coli (strain SMS-3-5 / SECEC)).